The primary structure comprises 474 residues: tRNA-2-methylthio-N(6)-dimethylallyladenosine synthase (474 aa).

Residues Lys3–Arg120 enclose the MTTase N-terminal domain. [4Fe-4S] cluster-binding residues include Cys12, Cys49, Cys83, Cys157, Cys161, and Cys164. A Radical SAM core domain is found at Arg143–Arg375. One can recognise a TRAM domain in the interval Arg378–Arg441.

Belongs to the methylthiotransferase family. MiaB subfamily. Monomer. It depends on [4Fe-4S] cluster as a cofactor.

It is found in the cytoplasm. It catalyses the reaction N(6)-dimethylallyladenosine(37) in tRNA + (sulfur carrier)-SH + AH2 + 2 S-adenosyl-L-methionine = 2-methylsulfanyl-N(6)-dimethylallyladenosine(37) in tRNA + (sulfur carrier)-H + 5'-deoxyadenosine + L-methionine + A + S-adenosyl-L-homocysteine + 2 H(+). Catalyzes the methylthiolation of N6-(dimethylallyl)adenosine (i(6)A), leading to the formation of 2-methylthio-N6-(dimethylallyl)adenosine (ms(2)i(6)A) at position 37 in tRNAs that read codons beginning with uridine. In Shewanella baltica (strain OS155 / ATCC BAA-1091), this protein is tRNA-2-methylthio-N(6)-dimethylallyladenosine synthase.